Reading from the N-terminus, the 131-residue chain is Antiholin (131 aa).

At 1 to 15 (MTMIAWMQHFLETDE) the chain is on the periplasmic side. Cytoplasmic-side segments run 1–52 (MTMI…SSFK) and 39–50 (FAKLNPNIKFSS). The chain crosses the membrane as a helical span at residues 16–38 (TKLIYWLTFLMVCMVVDTVLGVL). A helical transmembrane segment spans residues 53–75 (IKTGVLIKVSEMILALLAVPFAV). The Periplasmic segment spans residues 76 to 78 (PFP). Residues 79-101 (AGLPLLYTVYTALCVSEIYSIFG) form a helical membrane-spanning segment. The Cytoplasmic portion of the chain corresponds to 102–131 (HLRLVDDKSDFLEILENFFKRTSGKNKEDK).

Belongs to the bacteriophage holin family. phi29likevirus holin subfamily. Homomultimer. Interacts with isoform Antiholin; this interaction blocks the holin homomultimerization and delays host cell lysis.

It is found in the host cell inner membrane. Its function is as follows. Accumulates harmlessly in the cytoplasmic membrane until it reaches a critical concentration that triggers the formation of micron-scale pores (holes) causing host cell membrane disruption and endolysin escape into the periplasmic space. Determines the precise timing of host cell lysis. Participates with the endolysin and spanin proteins in the sequential events which lead to the programmed host cell lysis releasing the mature viral particles from the host cell. In terms of biological role, counteracts the aggregation of the holin molecules and thus of pore formation. The protein is Antiholin (14) of Bacillus subtilis (Bacteriophage PZA).